The chain runs to 545 residues: DNA-binding protein REPIN1 (545 aa).

The interval 1–50 (MLEQRCRGPTAMGPAQPWLFSGPSQESSQPDRGLRYQGKSAQPRGQTPGK) is disordered. The residue at position 27 (Ser27) is a Phosphoserine. At Lys39 the chain carries N6-acetyllysine. The C2H2-type 1; atypical zinc finger occupies 52–74 (HRCAHCRKRFPGWVALWLHARRC). 2 C2H2-type zinc fingers span residues 80-102 (LPCHECNQRFRHAPFLALHLQVH) and 111-133 (FICHLCGHSFRGWVALVLHLRAH). The C2H2-type 4; atypical zinc finger occupies 140–162 (ITCPECDRRFWRQKQLRAHLRRC). 11 consecutive C2H2-type zinc fingers follow at residues 172–194 (FICGNCGRSFAQWDQLVVHKRVH), 229–251 (FQCACCGKRFRHKPNLIAHRRVH), 257–279 (HQCPECGKRFTNKPYLTSHRRIH), 285–307 (YPCTECGRRFRHKPNLLSHSKIH), 353–375 (HSCSDCGRSFRLERFLRLHQRQH), 381–403 (FACTECGKNFGKKTHLVAHSRVH), 409–431 (FACEECGRRFSQGSHLAAHRRDH), 437–459 (FVCPDCGKAFRHKPYLAAHRRIH), 465–487 (YVCPDCGKAFSQKSNLVSHRRIH), 493–515 (YACPDCDRSFSQKSNLITHRKSH), and 521–543 (FCCAICGQTFDDEDRLLMHQKKH). Lys269 carries the post-translational modification N6-acetyllysine.

In terms of assembly, homodimers and homomultimers. Found in a complex with RIP60 and RIP100.

The protein resides in the nucleus. It localises to the cytoplasm. It is found in the cytosol. Its function is as follows. Sequence-specific double-stranded DNA-binding protein. Binds ATT-rich and T-rich DNA sequences and facilitates DNA bending. May regulate the expression of genes involved in cellular fatty acid import, including SCARB1/CD36, and genes involved in lipid droplet formation. May regulate the expression of LCN2, and thereby influence iron metabolism and apoptosis-related pathways. May regulate the expression of genes involved in glucose transport. The protein is DNA-binding protein REPIN1 (Repin1) of Mus musculus (Mouse).